Reading from the N-terminus, the 198-residue chain is Cytochrome c oxidase assembly protein CtaG (198 aa).

Over 1-12 the chain is Cytoplasmic; the sequence is MADNGQADRKER. The helical; Signal-anchor for type II membrane protein transmembrane segment at 13–35 threads the bilayer; the sequence is SNGVIVGTCLAFVAGMIGMAYAA. Residues 36 to 198 are Periplasmic-facing; the sequence is VPLYDMFCRV…QVKAKAENKL (163 aa).

It belongs to the COX11/CtaG family.

The protein resides in the cell inner membrane. Exerts its effect at some terminal stage of cytochrome c oxidase synthesis, probably by being involved in the insertion of the copper B into subunit I. The protein is Cytochrome c oxidase assembly protein CtaG of Rhizobium meliloti (strain 1021) (Ensifer meliloti).